Here is a 421-residue protein sequence, read N- to C-terminus: UDP-N-acetylglucosamine 1-carboxyvinyltransferase (421 aa).

22–23 provides a ligand contact to phosphoenolpyruvate; sequence KN. A UDP-N-acetyl-alpha-D-glucosamine-binding site is contributed by Arg94. The Proton donor role is filled by Cys118. Cys118 is subject to 2-(S-cysteinyl)pyruvic acid O-phosphothioketal. Residues 163–166, Asp308, and Ile330 each bind UDP-N-acetyl-alpha-D-glucosamine; that span reads KVSV.

The protein belongs to the EPSP synthase family. MurA subfamily.

The protein resides in the cytoplasm. It catalyses the reaction phosphoenolpyruvate + UDP-N-acetyl-alpha-D-glucosamine = UDP-N-acetyl-3-O-(1-carboxyvinyl)-alpha-D-glucosamine + phosphate. It functions in the pathway cell wall biogenesis; peptidoglycan biosynthesis. Functionally, cell wall formation. Adds enolpyruvyl to UDP-N-acetylglucosamine. The protein is UDP-N-acetylglucosamine 1-carboxyvinyltransferase of Orientia tsutsugamushi (strain Ikeda) (Rickettsia tsutsugamushi).